The primary structure comprises 86 residues: Beta-toxin Tz1 (86 aa).

Positions 1 to 20 (MTRFVLFICCFFLIGMVVEC) are cleaved as a signal peptide. The LCN-type CS-alpha/beta domain occupies 21-83 (KDGYLVGNDG…TWDRATNRCG (63 aa)). 4 cysteine pairs are disulfide-bonded: Cys-31–Cys-82, Cys-35–Cys-57, Cys-43–Cys-63, and Cys-47–Cys-65. The residue at position 84 (Arg-84) is an Arginine amide.

This sequence belongs to the long (4 C-C) scorpion toxin superfamily. Sodium channel inhibitor family. Beta subfamily. As to expression, expressed by the venom gland.

It is found in the secreted. Its function is as follows. Beta toxins bind voltage-independently at site-4 of sodium channels (Nav) and shift the voltage of activation toward more negative potentials thereby affecting sodium channel activation and promoting spontaneous and repetitive firing. Strongly affects skeletal muscle channels Nav1.4/SCN4A, poorly affects the neuronal channels Nav1.6/SCN8A and Nav1.2/SCN2A. Induces spastic paralysis of rear limbs, increased salivation, apnea, tachycardia and increased perspiration. The sequence is that of Beta-toxin Tz1 from Tityus zulianus (Venezuelan scorpion).